The sequence spans 285 residues: MKTLKHALIVYKVGNPQAEKTAHDIQHWFYNKNVTSNLFSSDIPESQLKQSLVHTQVAIILGGDGTFLSISRNLIEKQIPVLGINFGQVGFLVEIHPENWPQMLEQLYSHKLVLQKKIVLSWSIIRHNQVIKNGFAINDVVVGRGALARVLAVDVSINKHHIGVIRSDGILVSTPLGTSGYTISAHGPLVHPDVQALTLTSVSTLFRSTPPLVLPLSTTITLTPSPHAIEPFLTVDGQEGFVLKPNDSVGIQGIKSGLLIYTTANYSYLQHLQKKGLLSSTDFNL.

D64 (proton acceptor) is an active-site residue. NAD(+) is bound by residues 64–65, 138–139, R149, R166, D168, L176, 179–184, and Q238; these read DG, ND, and SGYTIS.

Belongs to the NAD kinase family. A divalent metal cation is required as a cofactor.

The protein localises to the cytoplasm. The catalysed reaction is NAD(+) + ATP = ADP + NADP(+) + H(+). In terms of biological role, involved in the regulation of the intracellular balance of NAD and NADP, and is a key enzyme in the biosynthesis of NADP. Catalyzes specifically the phosphorylation on 2'-hydroxyl of the adenosine moiety of NAD to yield NADP. The sequence is that of NAD kinase from Lawsonia intracellularis (strain PHE/MN1-00).